We begin with the raw amino-acid sequence, 936 residues long: Protocadherin gamma-A10 (936 aa).

An N-terminal signal peptide occupies residues 1 to 32 (MAAQRNRSKESKDCSGLVLLCLFFGIPWEAGA). Cadherin domains lie at 33-137 (RQIS…APKF), 138-246 (QAEN…APVF), 247-351 (TLPE…SPEL), 352-456 (TITS…PPTF), 457-566 (SQVS…APEI), and 574-687 (DGST…SPAN). Residues 33-696 (RQISYSIPEE…NSETSDLTLY (664 aa)) are Extracellular-facing. An N-linked (GlcNAc...) asparagine glycan is attached at Asn-51. Asn-423 and Asn-549 each carry an N-linked (GlcNAc...) asparagine glycan. Residues 697-717 (LVVAVAAVSCVFLAFVIVLLA) form a helical membrane-spanning segment. Topologically, residues 718–936 (HRLRRWHKSR…KKKSGKKEKK (219 aa)) are cytoplasmic. 2 disordered regions span residues 806-845 (EDTPLVPQAPPNTDWRFSQAQRPGTSGSQNGDDTGTWPNN) and 906-936 (ATLTNAAGKRDGKAPAGGNGNKKKSGKKEKK). Positions 820–845 (WRFSQAQRPGTSGSQNGDDTGTWPNN) are enriched in polar residues. Residues 926 to 936 (NKKKSGKKEKK) show a composition bias toward basic residues.

It is found in the cell membrane. In terms of biological role, potential calcium-dependent cell-adhesion protein. May be involved in the establishment and maintenance of specific neuronal connections in the brain. In Homo sapiens (Human), this protein is Protocadherin gamma-A10 (PCDHGA10).